Here is a 412-residue protein sequence, read N- to C-terminus: Proteasome-activating nucleotidase (412 aa).

A coiled-coil region spans residues 15–72 (EDLYRYLLERVTNLEDRNTELREQLRQIEADKRYLETQKVRYEREVRKFKGEIEQMKS). Residues 197 to 202 (GTGKTL) and His-336 contribute to the ATP site. A docks into pockets in the proteasome alpha-ring to cause gate opening region spans residues 410-412 (MFA).

It belongs to the AAA ATPase family. As to quaternary structure, homohexamer. The hexameric complex has a two-ring architecture resembling a top hat that caps the 20S proteasome core at one or both ends. Upon ATP-binding, the C-terminus of PAN interacts with the alpha-rings of the proteasome core by binding to the intersubunit pockets.

It is found in the cytoplasm. In terms of biological role, ATPase which is responsible for recognizing, binding, unfolding and translocation of substrate proteins into the archaeal 20S proteasome core particle. Is essential for opening the gate of the 20S proteasome via an interaction with its C-terminus, thereby allowing substrate entry and access to the site of proteolysis. Thus, the C-termini of the proteasomal ATPase function like a 'key in a lock' to induce gate opening and therefore regulate proteolysis. Unfolding activity requires energy from ATP hydrolysis, whereas ATP binding alone promotes ATPase-20S proteasome association which triggers gate opening, and supports translocation of unfolded substrates. This is Proteasome-activating nucleotidase from Methanosphaerula palustris (strain ATCC BAA-1556 / DSM 19958 / E1-9c).